Reading from the N-terminus, the 59-residue chain is Photosystem II reaction center protein K (59 aa).

The propeptide occupies 1–22; the sequence is MLNIFSLICLNSALHSSSFFFA. A helical transmembrane segment spans residues 38–58; the sequence is MPVIPVLFFLLALVWQAAVSF.

Belongs to the PsbK family. PSII is composed of 1 copy each of membrane proteins PsbA, PsbB, PsbC, PsbD, PsbE, PsbF, PsbH, PsbI, PsbJ, PsbK, PsbL, PsbM, PsbT, PsbX, PsbY, PsbZ, Psb30/Ycf12, at least 3 peripheral proteins of the oxygen-evolving complex and a large number of cofactors. It forms dimeric complexes.

The protein localises to the plastid. It localises to the chloroplast thylakoid membrane. Its function is as follows. One of the components of the core complex of photosystem II (PSII). PSII is a light-driven water:plastoquinone oxidoreductase that uses light energy to abstract electrons from H(2)O, generating O(2) and a proton gradient subsequently used for ATP formation. It consists of a core antenna complex that captures photons, and an electron transfer chain that converts photonic excitation into a charge separation. The polypeptide is Photosystem II reaction center protein K (Calycanthus floridus var. glaucus (Eastern sweetshrub)).